The following is a 328-amino-acid chain: Transcription initiation factor IIB 4 (328 aa).

Composition is skewed to basic and acidic residues over residues 1–12 (MTNQRTTRDGSH) and 21–32 (RSRESTDEDHGC). The segment at 1-47 (MTNQRTTRDGSHGTESVPTQRSRESTDEDHGCPECNGDLVTDEDRGE) is disordered. The segment at 28-58 (EDHGCPECNGDLVTDEDRGETTCGECGLVVE) adopts a TFIIB-type zinc-finger fold. Residues cysteine 32, cysteine 35, cysteine 50, and cysteine 53 each coordinate Zn(2+). Repeat copies occupy residues 144–227 (GEIE…AREL) and 238–319 (SYVP…EILD).

It belongs to the TFIIB family.

In terms of biological role, stabilizes TBP binding to an archaeal box-A promoter. Also responsible for recruiting RNA polymerase II to the pre-initiation complex (DNA-TBP-TFIIB). The protein is Transcription initiation factor IIB 4 of Halobacterium salinarum (strain ATCC 700922 / JCM 11081 / NRC-1) (Halobacterium halobium).